Reading from the N-terminus, the 374-residue chain is Lactoyl-CoA dehydratase subunit beta (374 aa).

It belongs to the FldB/FldC dehydratase alpha/beta subunit family. In terms of assembly, heterodimer of an alpha (LcdA) and a beta (LcdB) subunit. [4Fe-4S] cluster is required as a cofactor. Requires FMN as cofactor. Riboflavin serves as cofactor. It depends on Mg(2+) as a cofactor.

It catalyses the reaction (R)-lactoyl-CoA = acryloyl-CoA + H2O. It carries out the reaction (2R)-hydroxybutanoyl-CoA = (2E)-butenoyl-CoA + H2O. Its activity is regulated as follows. Activated by the LcdC protein. In terms of biological role, involved in the acrylate pathway for the conversion of D-lactic acid to propionic acid. Catalyzes the reversible dehydration of Lactoyl-CoA and 2-hydroxybutyroyl-CoA to acryloyl-CoA and crotonyl-CoA, respectively. The polypeptide is Lactoyl-CoA dehydratase subunit beta (lcdB) (Anaerotignum propionicum (Clostridium propionicum)).